The chain runs to 506 residues: Thyroid hormone receptor alpha (506 aa).

Residues 1-32 (MEQKPSKVECGSDPEENSARSPDGKRKRKNGQ) are disordered. The tract at residues 1–52 (MEQKPSKVECGSDPEENSARSPDGKRKRKNGQCSLKTSMSGYIPSYLDKDEQ) is modulating. Zn(2+) is bound by residues C53, C56, C70, C73, C91, C97, C107, and C110. NR C4-type zinc fingers lie at residues 53-73 (CVVC…CEGC) and 91-115 (CKYD…FKKC). Residues 53 to 127 (CVVCGDKATG…VGMAMDLVLD (75 aa)) constitute a DNA-binding region (nuclear receptor). In terms of domain architecture, NR LBD spans 163–407 (EEWDLIHVAT…EGQQLLGMHV (245 aa)). 2 residues coordinate 3,3',5-triiodo-L-thyronine: R228 and S277. Positions 460 to 506 (GEDDSSEAGSLTSSDEDPEVCEDAAQATQPLPEAPPRADGEGGGGGS) are disordered.

Belongs to the nuclear hormone receptor family. NR1 subfamily. Binds DNA as a dimer; homodimer and heterodimer with RXRB. Interacts with NCOA3 and NCOA6 coactivators, leading to a strong increase of transcription of target genes. Probably interacts with SFPQ. Interacts with C1D. Interacts with AKAP13. Interacts with TP53INP2. Interacts with PER2. Interacts with PER2. Isoform alpha-2 and isoform alpha-1 interact with TACC1, but the interaction with alpha-1 is weaker. The interaction with isoform alpha-1, but not alpha-2, is decreased in the presence of thyroid hormone T3.

It localises to the nucleus. The protein localises to the cytoplasm. Nuclear hormone receptor that can act as a repressor or activator of transcription. High affinity receptor for thyroid hormones, including triiodothyronine and thyroxine. The polypeptide is Thyroid hormone receptor alpha (THRA) (Sus scrofa (Pig)).